A 123-amino-acid polypeptide reads, in one-letter code: ATP synthase epsilon chain (123 aa).

Belongs to the ATPase epsilon chain family. In terms of assembly, F-type ATPases have 2 components, CF(1) - the catalytic core - and CF(0) - the membrane proton channel. CF(1) has five subunits: alpha(3), beta(3), gamma(1), delta(1), epsilon(1). CF(0) has three main subunits: a, b and c.

Its subcellular location is the cell inner membrane. In terms of biological role, produces ATP from ADP in the presence of a proton gradient across the membrane. This chain is ATP synthase epsilon chain, found in Helicobacter pylori (strain P12).